Reading from the N-terminus, the 1510-residue chain is ABC transporter C family MRP4 (1510 aa).

12 helical membrane passes run 12–32, 55–75, 78–98, 109–129, 138–158, 177–197, 319–339, 342–362, 373–393, 427–447, 453–473, and 540–560; these read EAVA…LLLL, PAVV…AGAW, AVLA…SYEV, ALLL…LALQ, FPAL…VIAY, MVAN…GVMG, TFAA…SYFV, LSGN…FFVA, WYLG…AMVY, AWYF…LAIL, IAMV…VPVA, and FVFW…CILL. The region spanning 320-595 is the ABC transmembrane type-1 1 domain; that stretch reads FAAVNTIVSY…FPDLISMMAQ (276 aa). The 224-residue stretch at 629-852 folds into the ABC transporter 1 domain; sequence VDIKDGAFSW…GTDFNALVSA (224 aa). Position 664-671 (664-671) interacts with ATP; that stretch reads GVIGSGKS. Residues 889–925 form a disordered region; it reads LKNKMCENGQPSNTRGIKEKKKKEERKKKRTVQEEER. Residues 906–918 are compositionally biased toward basic residues; the sequence is KEKKKKEERKKKR. A run of 6 helical transmembrane segments spans residues 945–965, 985–1005, 1060–1082, 1086–1108, 1154–1174, and 1179–1199; these read GTLI…QIAS, SVVL…FVFM, IAFR…AVMS, WQVL…YYIA, LLDC…WLCL, and LSTF…PGTI. Residues 950–1220 enclose the ABC transmembrane type-1 2 domain; that stretch reads LIILAQTMFQ…GLNLNARMSR (271 aa). Residues 1267 to 1501 form the ABC transporter 2 domain; that stretch reads IELIDLKVRY…KSSMFIQLVS (235 aa). An ATP-binding site is contributed by 1301-1308; the sequence is GRTGSGKS.

Belongs to the ABC transporter superfamily. ABCC family. Conjugate transporter (TC 3.A.1.208) subfamily. As to expression, expressed in roots, leaves, stalks, tassels, silks, developing seeds and developing embryos.

Its subcellular location is the membrane. Its function is as follows. ABC transporter that may affect phytic acid transport and compartmentalization. May function directly or indirectly in removing phytic acid from the cytosol or in vesicle trafficking. Required for phytic acid accumulation in developing seeds. Phytic acid is the primary storage form of phosphorus in cereal grains and other plant seeds. This is ABC transporter C family MRP4 from Zea mays (Maize).